A 163-amino-acid polypeptide reads, in one-letter code: UPF0478 protein SERP1299 (163 aa).

A helical membrane pass occupies residues 7–27; it reads IAGIIAAIAFLILCIGIVVVL.

This sequence belongs to the UPF0478 family.

It is found in the cell membrane. In Staphylococcus epidermidis (strain ATCC 35984 / DSM 28319 / BCRC 17069 / CCUG 31568 / BM 3577 / RP62A), this protein is UPF0478 protein SERP1299.